The primary structure comprises 608 residues: N(6)-adenosine-methyltransferase MT-A70-like protein (608 aa).

The span at 250 to 265 (KKKQERRDEKELRPDV) shows a compositional bias: basic and acidic residues. The interval 250 to 272 (KKKQERRDEKELRPDVDAGENVT) is disordered. S-adenosyl-L-methionine-binding positions include 395 to 396 (DL) and D413. The gate loop 1 stretch occupies residues 414–428 (PPWDIHMELPYGTMS). The segment at 480 to 497 (QLQRIIRTGRTGHWLNHG) is interphase loop. Residues 483–496 (RIIRTGRTGHWLNH) are positively charged region required for RNA-binding. The tract at residues 525-533 (VRATSHKPD) is gate loop 2. S-adenosyl-L-methionine is bound by residues K531, 554–557 (RPHN), and 567–568 (NQ).

The protein belongs to the MT-A70-like family. As to quaternary structure, component of the WMM complex, a N6-methyltransferase complex composed of a catalytic subcomplex, named MAC, and of an associated subcomplex, named MACOM. The MAC subcomplex is composed of Ime4/Mettl3 and Mettl14. The MACOM subcomplex is composed of fl(2)d, Flacc/Xio, Hakai, vir, and, in some cases of nito. As to expression, expressed in testes. In the ovaries, detected in germaria, prefollicle, follicle and polar cells (at protein levels). Detected in the ooplasm and in the cells of the 16-cell cyst of early stages (at protein levels).

It localises to the nucleus. It catalyses the reaction an adenosine in mRNA + S-adenosyl-L-methionine = an N(6)-methyladenosine in mRNA + S-adenosyl-L-homocysteine + H(+). In terms of biological role, catalytic component of the WMM complex, a complex that mediates N6-methyladenosine (m6A) methylation of mRNAs, a modification that plays a role in the efficiency of mRNA splicing and is required for sex determination. In the heterodimer formed with Mettl14, constitutes the catalytic core. Required for sex determination and dosage compensation via Sxl alternative splicing: m6A methylation acts as a key regulator of Sxl pre-mRNA and promotes female-specific alternative splicing of Sxl, which determines female physiognomy. M6A methylation is also required for neuronal functions. During oogenesis, required for egg chamber development probably as part of the N/Notch signaling. The sequence is that of N(6)-adenosine-methyltransferase MT-A70-like protein from Drosophila melanogaster (Fruit fly).